Reading from the N-terminus, the 370-residue chain is GTPase Obg (370 aa).

The region spanning 1 to 159 is the Obg domain; that stretch reads MKFIDEARIE…RMLRLELKVL (159 aa). One can recognise an OBG-type G domain in the interval 160–334; sequence ADVGLLGMPN…LCYAIYDYLA (175 aa). GTP is bound by residues 166-173, 191-195, 213-216, 284-287, and 315-317; these read GMPNAGKS, FTTLA, DIPG, NKLD, and SAL. Mg(2+)-binding residues include Ser-173 and Thr-193. The disordered stretch occupies residues 344 to 370; the sequence is EEEDLATDVRFRDAPPADGGATPGDDA.

This sequence belongs to the TRAFAC class OBG-HflX-like GTPase superfamily. OBG GTPase family. In terms of assembly, monomer. Mg(2+) is required as a cofactor.

Its subcellular location is the cytoplasm. An essential GTPase which binds GTP, GDP and possibly (p)ppGpp with moderate affinity, with high nucleotide exchange rates and a fairly low GTP hydrolysis rate. Plays a role in control of the cell cycle, stress response, ribosome biogenesis and in those bacteria that undergo differentiation, in morphogenesis control. This Burkholderia ambifaria (strain ATCC BAA-244 / DSM 16087 / CCUG 44356 / LMG 19182 / AMMD) (Burkholderia cepacia (strain AMMD)) protein is GTPase Obg.